Consider the following 314-residue polypeptide: ATP synthase gamma chain (314 aa).

The protein belongs to the ATPase gamma chain family. F-type ATPases have 2 components, CF(1) - the catalytic core - and CF(0) - the membrane proton channel. CF(1) has five subunits: alpha(3), beta(3), gamma(1), delta(1), epsilon(1). CF(0) has three main subunits: a, b and c.

Its subcellular location is the cell membrane. Its function is as follows. Produces ATP from ADP in the presence of a proton gradient across the membrane. The gamma chain is believed to be important in regulating ATPase activity and the flow of protons through the CF(0) complex. The chain is ATP synthase gamma chain from Cutibacterium acnes (strain DSM 16379 / KPA171202) (Propionibacterium acnes).